Here is a 52-residue protein sequence, read N- to C-terminus: Protein YabQ (52 aa).

Its function is as follows. Identified as a multicopy suppressor of the slow growth phenotype of an rsgA (yjeQ) deletion mutant. This chain is Protein YabQ (yabQ), found in Escherichia coli (strain K12).